A 76-amino-acid polypeptide reads, in one-letter code: Putative antitoxin VapB2 (76 aa).

It belongs to the UPF0330 family.

In terms of biological role, possibly the antitoxin component of a type II toxin-antitoxin (TA) system. Its cognate toxin is VapC2 (Potential). The chain is Putative antitoxin VapB2 (vapB2) from Pyrococcus abyssi (strain GE5 / Orsay).